The sequence spans 130 residues: ATP synthase epsilon chain (130 aa).

This sequence belongs to the ATPase epsilon chain family. F-type ATPases have 2 components, CF(1) - the catalytic core - and CF(0) - the membrane proton channel. CF(1) has five subunits: alpha(3), beta(3), gamma(1), delta(1), epsilon(1). CF(0) has three main subunits: a, b and c.

The protein localises to the cell inner membrane. Produces ATP from ADP in the presence of a proton gradient across the membrane. The sequence is that of ATP synthase epsilon chain from Campylobacter lari (strain RM2100 / D67 / ATCC BAA-1060).